The following is a 555-amino-acid chain: Beta-fructofuranosidase, cell wall isozyme (555 aa).

A signal peptide spans 1 to 22 (MAISSIFLLSLFSLIYVIPIEA). Residues 58–61 (WIND), Gln77, Trp85, and 120–121 (WS) each bind substrate. Asp61 is an active-site residue. Residue Asp140 is part of the active site. 2 N-linked (GlcNAc...) asparagine glycosylation sites follow: Asn154 and Asn181. Residues 186–187 (RD), Glu241, and Asp277 contribute to the substrate site. Asn337 carries N-linked (GlcNAc...) asparagine glycosylation. A disulfide bond links Cys435 and Cys481.

This sequence belongs to the glycosyl hydrolase 32 family.

The enzyme catalyses Hydrolysis of terminal non-reducing beta-D-fructofuranoside residues in beta-D-fructofuranosides.. This Pisum sativum (Garden pea) protein is Beta-fructofuranosidase, cell wall isozyme (BFRUCT1).